The chain runs to 282 residues: NADPH-dependent 7-cyano-7-deazaguanine reductase (282 aa).

88 to 90 is a binding site for substrate; it reads IES. 90–91 serves as a coordination point for NADPH; that stretch reads SK. Cys-190 acts as the Thioimide intermediate in catalysis. Asp-197 functions as the Proton donor in the catalytic mechanism. Position 229-230 (229-230) interacts with substrate; that stretch reads HE. 258-259 contacts NADPH; the sequence is RG.

The protein belongs to the GTP cyclohydrolase I family. QueF type 2 subfamily. In terms of assembly, homodimer.

The protein resides in the cytoplasm. The enzyme catalyses 7-aminomethyl-7-carbaguanine + 2 NADP(+) = 7-cyano-7-deazaguanine + 2 NADPH + 3 H(+). Its pathway is tRNA modification; tRNA-queuosine biosynthesis. In terms of biological role, catalyzes the NADPH-dependent reduction of 7-cyano-7-deazaguanine (preQ0) to 7-aminomethyl-7-deazaguanine (preQ1). In Escherichia coli O17:K52:H18 (strain UMN026 / ExPEC), this protein is NADPH-dependent 7-cyano-7-deazaguanine reductase.